The chain runs to 85 residues: UPF0297 protein LBA0418 (85 aa).

The protein belongs to the UPF0297 family.

The sequence is that of UPF0297 protein LBA0418 from Lactobacillus acidophilus (strain ATCC 700396 / NCK56 / N2 / NCFM).